Reading from the N-terminus, the 774-residue chain is Potassium/sodium hyperpolarization-activated cyclic nucleotide-gated channel 3 (774 aa).

A disordered region spans residues methionine 1–histidine 48. The Cytoplasmic portion of the chain corresponds to methionine 1–aspartate 97. The segment at arginine 46 to aspartate 91 is involved in subunit assembly. Residues leucine 98–phenylalanine 118 form a helical membrane-spanning segment. The Extracellular segment spans residues lysine 119–proline 124. Residues proline 125–phenylalanine 145 traverse the membrane as a helical segment. The Cytoplasmic portion of the chain corresponds to arginine 146–threonine 171. Residues tryptophan 172 to leucine 192 traverse the membrane as a helical segment. The Extracellular segment spans residues glutamate 193–tyrosine 201. The chain crosses the membrane as a helical; Voltage-sensor span at residues lysine 202 to leucine 222. Residues arginine 223–asparagine 253 lie on the Cytoplasmic side of the membrane. A helical membrane pass occupies residues leucine 254–methionine 274. At leucine 275 to glutamine 297 the chain is on the extracellular side. Residue asparagine 291 is glycosylated (N-linked (GlcNAc...) asparagine). Positions tyrosine 298–proline 319 form an intramembrane region, pore-forming. Residues valine 320 to methionine 329 are Extracellular-facing. The chain crosses the membrane as a helical span at residues leucine 330–isoleucine 350. Topologically, residues glutamine 351–methionine 774 are cytoplasmic. The segment at aspartate 354–methionine 774 is interaction with KCTD3. 7 residues coordinate 3',5'-cyclic AMP: glycine 492, glutamate 493, cysteine 495, arginine 502, threonine 503, arginine 543, and arginine 546. Position 634 is a phosphoserine (serine 634). A disordered region spans residues serine 682–methionine 774. The segment covering threonine 751 to alanine 763 has biased composition (pro residues).

It belongs to the potassium channel HCN family. Homotetramer. The potassium channel is composed of a homo- or heterotetrameric complex of pore-forming subunits. Interacts with HCN11. Interacts with KCTD3; this interaction increases cell surface expression and current density of this channel. Interacts with PEX5L. Detected in brain.

It is found in the cell membrane. The enzyme catalyses K(+)(in) = K(+)(out). It catalyses the reaction Na(+)(in) = Na(+)(out). With respect to regulation, unlike HCN2 and HCN4, HCN3 is insensitive to cyclic nucleotides, such as cAMP or cGMP. This lack of sensitivity of HCN3, despite harboring a functional cyclic nucleotide-binding domain (CNBD), may be explained by its shorter C-terminal sequence, which may alter the normal autoinhibition of the channel. Inhibited by Cs(1+) and ZD7288. Phosphatidylinositol-4,5-bisphosphate (PIP(2)) shifts HCN3 activation to more depolarized potentials and accelerated activation kinetics. Its function is as follows. Hyperpolarization-activated ion channel that are permeable to sodium and potassium ions, with an about 3:1 preference for potassium ions. Contributes to the native pacemaker currents in heart (If) and in neurons (Ih). In particular, plays a pivotal role in maintaining excitability and promoting rhythmic burst firing within hypothalamic nuclei. Exerts a significant influence on the configuration of the cardiac action potential waveform. Does not appear to play a prominent role in the processing of acute, neuropathic, or inflammatory pain. This is Potassium/sodium hyperpolarization-activated cyclic nucleotide-gated channel 3 (HCN3) from Homo sapiens (Human).